Reading from the N-terminus, the 234-residue chain is Sugar fermentation stimulation protein homolog (234 aa).

It belongs to the SfsA family.

This is Sugar fermentation stimulation protein homolog from Pectobacterium atrosepticum (strain SCRI 1043 / ATCC BAA-672) (Erwinia carotovora subsp. atroseptica).